The following is a 244-amino-acid chain: Probable transcriptional regulatory protein DMR_30850 (244 aa).

This sequence belongs to the TACO1 family.

It localises to the cytoplasm. The polypeptide is Probable transcriptional regulatory protein DMR_30850 (Solidesulfovibrio magneticus (strain ATCC 700980 / DSM 13731 / RS-1) (Desulfovibrio magneticus)).